Here is a 55-residue protein sequence, read N- to C-terminus: Large ribosomal subunit protein bL33 (55 aa).

This sequence belongs to the bacterial ribosomal protein bL33 family.

The protein is Large ribosomal subunit protein bL33 of Sodalis glossinidius (strain morsitans).